Here is a 416-residue protein sequence, read N- to C-terminus: Glutamyl-tRNA reductase (416 aa).

Residues 51–54 (TCNR), serine 110, 115–117 (EPQ), and glutamine 121 each bind substrate. The active-site Nucleophile is the cysteine 52. 190-195 (GAGQTG) contacts NADP(+).

This sequence belongs to the glutamyl-tRNA reductase family. Homodimer.

It catalyses the reaction (S)-4-amino-5-oxopentanoate + tRNA(Glu) + NADP(+) = L-glutamyl-tRNA(Glu) + NADPH + H(+). It participates in porphyrin-containing compound metabolism; protoporphyrin-IX biosynthesis; 5-aminolevulinate from L-glutamyl-tRNA(Glu): step 1/2. Its function is as follows. Catalyzes the NADPH-dependent reduction of glutamyl-tRNA(Glu) to glutamate 1-semialdehyde (GSA). The chain is Glutamyl-tRNA reductase from Francisella tularensis subsp. tularensis (strain FSC 198).